Consider the following 548-residue polypeptide: Natural resistance-associated macrophage protein 1 (548 aa).

A compositionally biased stretch (polar residues) spans 1–12 (MSGDTGTPNQGG). A disordered region spans residues 1–38 (MSGDTGTPNQGGTRYGSISSPPSPGPQQAPPGGTYLSE). At 1 to 55 (MSGDTGTPNQGGTRYGSISSPPSPGPQQAPPGGTYLSEKIPIPDTESGAFSLRKL) the chain is on the cytoplasmic side. Residues 56–73 (WAFTGPGFLMSIAFLDPG) form a helical membrane-spanning segment. The Extracellular portion of the chain corresponds to 74-82 (NIESDLQAG). Residues 83–102 (AVAGFKLLWVLLWATVLGLL) form a helical membrane-spanning segment. Residues 103–139 (CQRLAARLGVVTGKDLGEVCHLYYPKVPRTLLWLTIE) lie on the Cytoplasmic side of the membrane. A helical membrane pass occupies residues 140 to 160 (LAIVGSDMQEVIGTAIAFSLL). The Extracellular portion of the chain corresponds to 161-164 (SAGR). A helical transmembrane segment spans residues 165 to 184 (IPLWGGVLITIVDTFFFLFL). The Cytoplasmic segment spans residues 185–193 (DNYGLRKLE). Residues 194 to 214 (AFFGFLITIMALTFGYEYVVA) form a helical membrane-spanning segment. The Extracellular portion of the chain corresponds to 215 to 237 (RPAQGALLQGLFLPSCPGCGQPE). A helical transmembrane segment spans residues 238 to 256 (LLQAVGIVGAIIMPHNIYL). Over 257–284 (HSSLVKSREVDRSRRADIREANMYFLIE) the chain is Cytoplasmic. A helical transmembrane segment spans residues 285 to 304 (ATIALSVSFFINLFVMAVFG). Topologically, residues 305-346 (QAFYKQTNQAAFNICANSSLHDYATIFPRDNLTVAVDIYQGG) are extracellular. N-linked (GlcNAc...) asparagine glycosylation is found at N321 and N335. Residues 347–366 (VILGCLFGPAALYIWAVGLL) traverse the membrane as a helical segment. Over 367–397 (AAGQSSTMTGTYAGQFVMEGFLKLRWSRFAR) the chain is Cytoplasmic. The helical transmembrane segment at 398 to 415 (VLLTRSCAIPPTVLLAVF) threads the bilayer. Over 416 to 426 (RDLQDLSGLND) the chain is Extracellular. A helical membrane pass occupies residues 427–447 (LLNVLQSLLLPFAVLPILTFT). At 448 to 463 (SMPALMQEFANGLVSK) the chain is on the cytoplasmic side. The helical transmembrane segment at 464–485 (IITSSIMVLVCAVNLYFVISYV) threads the bilayer. The Extracellular portion of the chain corresponds to 486–493 (PSLPHPAY). A helical transmembrane segment spans residues 494–513 (FSLVALLAAAYLGLTTYLVW). The Cytoplasmic segment spans residues 514-548 (TCLITQGATRLAHSSHQRFLYGLPGEDQEEGRTSG).

It belongs to the NRAMP family.

Its subcellular location is the late endosome membrane. The protein resides in the lysosome membrane. It carries out the reaction Zn(2+)(in) + H(+)(out) = Zn(2+)(out) + H(+)(in). The catalysed reaction is Fe(2+)(in) + H(+)(out) = Fe(2+)(out) + H(+)(in). It catalyses the reaction Mn(2+)(in) + H(+)(out) = Mn(2+)(out) + H(+)(in). Functionally, macrophage-specific antiporter that fluxes metal ions in either direction against a proton gradient. Localized to late endosomal lysosomal membranes, delivers bivalent cations from the cytosol into these acidic compartments where they may directly affect antimicrobial activity. Involved in iron metabolism and host natural resistance to infection with intracellular parasites. Pathogen resistance involves sequestration of Fe(2+) and Mn(2+), cofactors of both prokaryotic and eukaryotic catalases and superoxide dismutases, not only to protect the macrophage against its own generation of reactive oxygen species, but to deny the cations to the pathogen for synthesis of its protective enzymes. The sequence is that of Natural resistance-associated macrophage protein 1 (SLC11A1) from Ovis aries (Sheep).